Consider the following 355-residue polypeptide: Protein RecA (355 aa).

67–74 contributes to the ATP binding site; it reads GPESSGKT. Residues 336–355 form a disordered region; the sequence is NSAASDYEDNENEEMNNEEF. Acidic residues predominate over residues 341 to 355; sequence DYEDNENEEMNNEEF.

The protein belongs to the RecA family.

It localises to the cytoplasm. Its function is as follows. Can catalyze the hydrolysis of ATP in the presence of single-stranded DNA, the ATP-dependent uptake of single-stranded DNA by duplex DNA, and the ATP-dependent hybridization of homologous single-stranded DNAs. It interacts with LexA causing its activation and leading to its autocatalytic cleavage. This is Protein RecA from Photorhabdus laumondii subsp. laumondii (strain DSM 15139 / CIP 105565 / TT01) (Photorhabdus luminescens subsp. laumondii).